Reading from the N-terminus, the 353-residue chain is Quinolinate synthase (353 aa).

Residues H47 and S68 each contribute to the iminosuccinate site. C113 provides a ligand contact to [4Fe-4S] cluster. Residues 139–141 (YAN) and S156 contribute to the iminosuccinate site. C200 serves as a coordination point for [4Fe-4S] cluster. Iminosuccinate-binding positions include 226-228 (HPE) and T243. C297 lines the [4Fe-4S] cluster pocket.

The protein belongs to the quinolinate synthase family. Type 1 subfamily. [4Fe-4S] cluster serves as cofactor.

The protein localises to the cytoplasm. The enzyme catalyses iminosuccinate + dihydroxyacetone phosphate = quinolinate + phosphate + 2 H2O + H(+). It functions in the pathway cofactor biosynthesis; NAD(+) biosynthesis; quinolinate from iminoaspartate: step 1/1. Its function is as follows. Catalyzes the condensation of iminoaspartate with dihydroxyacetone phosphate to form quinolinate. This chain is Quinolinate synthase, found in Vibrio vulnificus (strain YJ016).